Reading from the N-terminus, the 294-residue chain is Probable endonuclease 4 (294 aa).

Zn(2+) contacts are provided by H78, H118, E157, D191, H194, H228, D241, H243, and E273.

The protein belongs to the AP endonuclease 2 family. Requires Zn(2+) as cofactor.

It carries out the reaction Endonucleolytic cleavage to 5'-phosphooligonucleotide end-products.. Functionally, endonuclease IV plays a role in DNA repair. It cleaves phosphodiester bonds at apurinic or apyrimidinic (AP) sites, generating a 3'-hydroxyl group and a 5'-terminal sugar phosphate. The chain is Probable endonuclease 4 from Streptomyces coelicolor (strain ATCC BAA-471 / A3(2) / M145).